The following is a 63-amino-acid chain: Protein sigN172 (63 aa).

This chain is Protein sigN172, found in Dictyostelium discoideum (Social amoeba).